The chain runs to 303 residues: GTP cyclohydrolase FolE2 (303 aa).

It belongs to the GTP cyclohydrolase IV family.

The catalysed reaction is GTP + H2O = 7,8-dihydroneopterin 3'-triphosphate + formate + H(+). It functions in the pathway cofactor biosynthesis; 7,8-dihydroneopterin triphosphate biosynthesis; 7,8-dihydroneopterin triphosphate from GTP: step 1/1. Its function is as follows. Converts GTP to 7,8-dihydroneopterin triphosphate. The chain is GTP cyclohydrolase FolE2 from Exiguobacterium sp. (strain ATCC BAA-1283 / AT1b).